The primary structure comprises 154 residues: Insulin-like growth factor 1 (154 aa).

A b region spans residues 50–78 (GPETLCGAELVDALQFVCGDRGFYFNKPT). 3 disulfide bridges follow: C55/C97, C67/C110, and C96/C101. Positions 79–90 (GYGSSSRRAPQT) are c. Residues 91–111 (GIVDECCFRSCDLRRLEMYCA) are a. The interval 112 to 119 (PLKAAKSA) is d. Residues 120–154 (RSVRAQRHTDMPKAQKEVHLKNTSRGSAGNKNYRM) constitute a propeptide, e peptide. The interval 121–154 (SVRAQRHTDMPKAQKEVHLKNTSRGSAGNKNYRM) is disordered. Over residues 126–139 (RHTDMPKAQKEVHL) the composition is skewed to basic and acidic residues. Polar residues predominate over residues 140-154 (KNTSRGSAGNKNYRM).

Belongs to the insulin family. As to quaternary structure, forms a ternary complex with IGFR1 and ITGAV:ITGB3. Forms a ternary complex with IGFR1 and ITGA6:ITGB4. Forms a ternary complex with IGFBP3 and ALS.

It localises to the secreted. In terms of biological role, the insulin-like growth factors, isolated from plasma, are structurally and functionally related to insulin but have a much higher growth-promoting activity. May be a physiological regulator of [1-14C]-2-deoxy-D-glucose (2DG) transport and glycogen synthesis in osteoblasts. Stimulates glucose transport in bone-derived osteoblastic (PyMS) cells and is effective at much lower concentrations than insulin, not only regarding glycogen and DNA synthesis but also with regard to enhancing glucose uptake. May play a role in synapse maturation. Ca(2+)-dependent exocytosis of IGF1 is required for sensory perception of smell in the olfactory bulb. Acts as a ligand for IGF1R. Binds to the alpha subunit of IGF1R, leading to the activation of the intrinsic tyrosine kinase activity which autophosphorylates tyrosine residues in the beta subunit thus initiating a cascade of down-stream signaling events leading to activation of the PI3K-AKT/PKB and the Ras-MAPK pathways. Binds to integrins ITGAV:ITGB3 and ITGA6:ITGB4. Its binding to integrins and subsequent ternary complex formation with integrins and IGFR1 are essential for IGF1 signaling. Induces the phosphorylation and activation of IGFR1, MAPK3/ERK1, MAPK1/ERK2 and AKT1. As part of the MAPK/ERK signaling pathway, acts as a negative regulator of apoptosis in cardiomyocytes via promotion of STUB1/CHIP-mediated ubiquitination and degradation of ICER-type isoforms of CREM. The polypeptide is Insulin-like growth factor 1 (Ovis aries (Sheep)).